The chain runs to 101 residues: Urinary protein 2 (101 aa).

The N-terminal stretch at 1–21 (MGKHILLLPLGLSLLMSSLLA) is a signal peptide. A UPAR/Ly6 domain is found at 22-99 (LQCFRCTSFD…CSATPFCNMV (78 aa)). 5 cysteine pairs are disulfide-bonded: Cys-24–Cys-51, Cys-27–Cys-36, Cys-43–Cys-70, Cys-73–Cys-89, and Cys-90–Cys-96. 2 N-linked (GlcNAc...) asparagine glycosylation sites follow: Asn-67 and Asn-74.

In terms of processing, N-glycosylated.

The protein resides in the secreted. The polypeptide is Urinary protein 2 (Rattus norvegicus (Rat)).